Consider the following 115-residue polypeptide: T cell receptor beta variable 2 (115 aa).

The first 19 residues, 1–19 (MDTWLVCWAIFSLLKAGLT), serve as a signal peptide directing secretion. The Ig-like domain occupies 21-115 (PEVTQTPSHQ…SAMYFCASSE (95 aa)). A disulfide bridge links cysteine 42 with cysteine 111. Asparagine 93 carries N-linked (GlcNAc...) asparagine glycosylation.

In terms of assembly, alpha-beta TR is a heterodimer composed of an alpha and beta chain; disulfide-linked. The alpha-beta TR is associated with the transmembrane signaling CD3 coreceptor proteins to form the TR-CD3 (TcR or TCR). The assembly of alpha-beta TR heterodimers with CD3 occurs in the endoplasmic reticulum where a single alpha-beta TR heterodimer associates with one CD3D-CD3E heterodimer, one CD3G-CD3E heterodimer and one CD247 homodimer forming a stable octameric structure. CD3D-CD3E and CD3G-CD3E heterodimers preferentially associate with TR alpha and TR beta chains, respectively. The association of the CD247 homodimer is the last step of TcR assembly in the endoplasmic reticulum and is required for transport to the cell surface.

It localises to the cell membrane. In terms of biological role, v region of the variable domain of T cell receptor (TR) beta chain that participates in the antigen recognition. Alpha-beta T cell receptors are antigen specific receptors which are essential to the immune response and are present on the cell surface of T lymphocytes. Recognize peptide-major histocompatibility (MH) (pMH) complexes that are displayed by antigen presenting cells (APC), a prerequisite for efficient T cell adaptive immunity against pathogens. Binding of alpha-beta TR to pMH complex initiates TR-CD3 clustering on the cell surface and intracellular activation of LCK that phosphorylates the ITAM motifs of CD3G, CD3D, CD3E and CD247 enabling the recruitment of ZAP70. In turn ZAP70 phosphorylates LAT, which recruits numerous signaling molecules to form the LAT signalosome. The LAT signalosome propagates signal branching to three major signaling pathways, the calcium, the mitogen-activated protein kinase (MAPK) kinase and the nuclear factor NF-kappa-B (NF-kB) pathways, leading to the mobilization of transcription factors that are critical for gene expression and essential for T cell growth and differentiation. The T cell repertoire is generated in the thymus, by V-(D)-J rearrangement. This repertoire is then shaped by intrathymic selection events to generate a peripheral T cell pool of self-MH restricted, non-autoaggressive T cells. Post-thymic interaction of alpha-beta TR with the pMH complexes shapes TR structural and functional avidity. This Homo sapiens (Human) protein is T cell receptor beta variable 2.